The primary structure comprises 122 residues: ORF7a protein (122 aa).

The signal sequence occupies residues 1–15 (MKIILFLTLIVFTSC). The region spanning 16–81 (ELYHYQECVR…RHTYQLRARS (66 aa)) is the X4e domain. Residues 16 to 96 (ELYHYQECVR…FIRQEEVQQE (81 aa)) lie on the Virion surface side of the membrane. 2 disulfide bridges follow: cysteine 23–cysteine 58 and cysteine 35–cysteine 67. The helical transmembrane segment at 97-117 (LYSPLFLIVAALVFLILCFTI) threads the bilayer. Residues 118 to 122 (KRKTE) are Intravirion-facing. The Di-lysine motif motif lies at 118–122 (KRKTE).

In terms of assembly, interacts with the spike glycoprotein. Interacts with M protein. Interacts with E protein. Interacts with the ORF3a protein. Interacts with human SGT. Interacts with host ITGAL. Interacts with host BST2.

Its subcellular location is the virion. It is found in the host endoplasmic reticulum membrane. The protein localises to the host endoplasmic reticulum-Golgi intermediate compartment membrane. The protein resides in the host Golgi apparatus membrane. Functionally, plays a role as antagonist of host tetherin (BST2), disrupting its antiviral effect. Acts by binding to BST2 thereby interfering with its glycosylation. May suppress small interfering RNA (siRNA). May bind to host ITGAL, thereby playing a role in attachment or modulation of leukocytes. This is ORF7a protein from Severe acute respiratory syndrome coronavirus (SARS-CoV).